The following is a 449-amino-acid chain: tRNA-2-methylthio-N(6)-dimethylallyladenosine synthase (449 aa).

The MTTase N-terminal domain occupies 13-128 (RRIFIETYGC…LPHLIGTVEK (116 aa)). Positions 22, 58, 92, 166, 170, and 173 each coordinate [4Fe-4S] cluster. Residues 152 to 383 (SRIKISGFIS…ITLQLKISLM (232 aa)) enclose the Radical SAM core domain. The TRAM domain occupies 386 to 449 (KENIGKTMEI…AATLFGDPKL (64 aa)).

The protein belongs to the methylthiotransferase family. MiaB subfamily. In terms of assembly, monomer. It depends on [4Fe-4S] cluster as a cofactor.

The protein localises to the cytoplasm. It catalyses the reaction N(6)-dimethylallyladenosine(37) in tRNA + (sulfur carrier)-SH + AH2 + 2 S-adenosyl-L-methionine = 2-methylsulfanyl-N(6)-dimethylallyladenosine(37) in tRNA + (sulfur carrier)-H + 5'-deoxyadenosine + L-methionine + A + S-adenosyl-L-homocysteine + 2 H(+). Functionally, catalyzes the methylthiolation of N6-(dimethylallyl)adenosine (i(6)A), leading to the formation of 2-methylthio-N6-(dimethylallyl)adenosine (ms(2)i(6)A) at position 37 in tRNAs that read codons beginning with uridine. The sequence is that of tRNA-2-methylthio-N(6)-dimethylallyladenosine synthase from Azobacteroides pseudotrichonymphae genomovar. CFP2.